The primary structure comprises 94 residues: Co-chaperonin GroES (94 aa).

Belongs to the GroES chaperonin family. Heptamer of 7 subunits arranged in a ring. Interacts with the chaperonin GroEL.

Its subcellular location is the cytoplasm. In terms of biological role, together with the chaperonin GroEL, plays an essential role in assisting protein folding. The GroEL-GroES system forms a nano-cage that allows encapsulation of the non-native substrate proteins and provides a physical environment optimized to promote and accelerate protein folding. GroES binds to the apical surface of the GroEL ring, thereby capping the opening of the GroEL channel. The sequence is that of Co-chaperonin GroES from Streptococcus mitis.